A 119-amino-acid polypeptide reads, in one-letter code: UPF0145 protein Bcep18194_B0595 (119 aa).

The protein belongs to the UPF0145 family.

The polypeptide is UPF0145 protein Bcep18194_B0595 (Burkholderia lata (strain ATCC 17760 / DSM 23089 / LMG 22485 / NCIMB 9086 / R18194 / 383)).